The following is a 430-amino-acid chain: Glutamine synthetase leaf isozyme, chloroplastic (430 aa).

The N-terminal 49 residues, 1–49 (MAQILAPSTQWQMRITKTSPCATPITSKMWSSLVMKQTKKVAHSAKFRV), are a transit peptide targeting the chloroplast. Residues 77–157 (IIAEYIWIGG…VVCDAYTPAG (81 aa)) enclose the GS beta-grasp domain. Residues 99 to 119 (SKPVSHPSEVPKWNYDGSSTG) form a disordered region. The region spanning 161–430 (PTNKRHRAAE…LAAQKIALKV (270 aa)) is the GS catalytic domain.

This sequence belongs to the glutamine synthetase family. Homooctamer.

It localises to the plastid. The protein localises to the chloroplast. It carries out the reaction L-glutamate + NH4(+) + ATP = L-glutamine + ADP + phosphate + H(+). Functionally, the light-modulated chloroplast enzyme, encoded by a nuclear gene and expressed primarily in leaves, is responsible for the reassimilation of the ammonia generated by photorespiration. This Pisum sativum (Garden pea) protein is Glutamine synthetase leaf isozyme, chloroplastic (GS2).